The chain runs to 368 residues: DNA replication and repair protein RecF (368 aa).

Gly30–Thr37 lines the ATP pocket.

This sequence belongs to the RecF family.

It localises to the cytoplasm. Functionally, the RecF protein is involved in DNA metabolism; it is required for DNA replication and normal SOS inducibility. RecF binds preferentially to single-stranded, linear DNA. It also seems to bind ATP. The chain is DNA replication and repair protein RecF from Streptococcus pyogenes serotype M12 (strain MGAS9429).